Reading from the N-terminus, the 248-residue chain is Adenosylcobinamide-GDP ribazoletransferase (248 aa).

7 helical membrane passes run 32-52 (FPLV…IGMV), 60-80 (ALLV…DGLA), 103-123 (AVGS…WIAL), 134-154 (WIVS…SVMT), 170-190 (AGGW…VLVM), 195-215 (LPIV…GMLA), and 227-247 (LGAS…LLLF).

This sequence belongs to the CobS family. Requires Mg(2+) as cofactor.

Its subcellular location is the cell inner membrane. It carries out the reaction alpha-ribazole + adenosylcob(III)inamide-GDP = adenosylcob(III)alamin + GMP + H(+). It catalyses the reaction alpha-ribazole 5'-phosphate + adenosylcob(III)inamide-GDP = adenosylcob(III)alamin 5'-phosphate + GMP + H(+). The protein operates within cofactor biosynthesis; adenosylcobalamin biosynthesis; adenosylcobalamin from cob(II)yrinate a,c-diamide: step 7/7. Its function is as follows. Joins adenosylcobinamide-GDP and alpha-ribazole to generate adenosylcobalamin (Ado-cobalamin). Also synthesizes adenosylcobalamin 5'-phosphate from adenosylcobinamide-GDP and alpha-ribazole 5'-phosphate. In Prosthecochloris aestuarii (strain DSM 271 / SK 413), this protein is Adenosylcobinamide-GDP ribazoletransferase.